A 336-amino-acid chain; its full sequence is UDP-3-O-acylglucosamine N-acyltransferase (336 aa).

H236 acts as the Proton acceptor in catalysis.

Belongs to the transferase hexapeptide repeat family. LpxD subfamily. In terms of assembly, homotrimer.

It carries out the reaction a UDP-3-O-[(3R)-3-hydroxyacyl]-alpha-D-glucosamine + a (3R)-hydroxyacyl-[ACP] = a UDP-2-N,3-O-bis[(3R)-3-hydroxyacyl]-alpha-D-glucosamine + holo-[ACP] + H(+). It functions in the pathway bacterial outer membrane biogenesis; LPS lipid A biosynthesis. Functionally, catalyzes the N-acylation of UDP-3-O-acylglucosamine using 3-hydroxyacyl-ACP as the acyl donor. Is involved in the biosynthesis of lipid A, a phosphorylated glycolipid that anchors the lipopolysaccharide to the outer membrane of the cell. The protein is UDP-3-O-acylglucosamine N-acyltransferase of Aromatoleum aromaticum (strain DSM 19018 / LMG 30748 / EbN1) (Azoarcus sp. (strain EbN1)).